The sequence spans 412 residues: Clamp protein VP6 (412 aa).

Belongs to the reoviridae clamp protein family. Interacts with capsid proteins VP3, VP5 and VP7.

It is found in the virion. In terms of biological role, located at the interface of the incomplete T=13 outer capsid and the pseudo T=2 inner capsid, 120 VP6 subunits clamp and stabilizes the inner capsid shell. The protein is Clamp protein VP6 (S8) of Aquareovirus C (isolate Golden shiner/USA/GSRV/1977) (AQRV-C).